The following is a 70-amino-acid chain: Gas vesicle protein A (70 aa).

The protein belongs to the gas vesicle GvpA family. As to quaternary structure, the gas vesicle shell is 2 nm thick and consists of a single layer of this protein. It forms helical ribs nearly perpendicular to the long axis of the vesicle.

It is found in the gas vesicle shell. Functionally, gas vesicles are hollow, gas filled proteinaceous nanostructures found in some microorganisms. During planktonic growth they allow positioning of the organism at a favorable depth for light or nutrient acquisition. GvpA forms the protein shell. The chain is Gas vesicle protein A from Cereibacter sphaeroides (strain ATCC 17023 / DSM 158 / JCM 6121 / CCUG 31486 / LMG 2827 / NBRC 12203 / NCIMB 8253 / ATH 2.4.1.) (Rhodobacter sphaeroides).